The primary structure comprises 275 residues: NAD(P)H-hydrate epimerase (275 aa).

Positions 49 to 258 (AIKIDQELFS…ALAAKYELNL (210 aa)) constitute a YjeF N-terminal domain. Residue 102–106 (NNGGD) coordinates (6S)-NADPHX. Residues Asn-103 and Asp-167 each contribute to the K(+) site. Residues 171–177 (GFSFKPP) and Asp-200 contribute to the (6S)-NADPHX site. Ser-203 provides a ligand contact to K(+).

The protein belongs to the NnrE/AIBP family. It depends on K(+) as a cofactor.

It carries out the reaction (6R)-NADHX = (6S)-NADHX. The catalysed reaction is (6R)-NADPHX = (6S)-NADPHX. Catalyzes the epimerization of the S- and R-forms of NAD(P)HX, a damaged form of NAD(P)H that is a result of enzymatic or heat-dependent hydration. This is a prerequisite for the S-specific NAD(P)H-hydrate dehydratase to allow the repair of both epimers of NAD(P)HX. The protein is NAD(P)H-hydrate epimerase of Ixodes scapularis (Black-legged tick).